The primary structure comprises 402 residues: Beta-1,4-galactosyltransferase 1 (402 aa).

Residues 1–24 (MKFREPLLGGSAAMPGASLQRACR) lie on the Cytoplasmic side of the membrane. The helical; Signal-anchor for type II membrane protein transmembrane segment at 25–44 (LLVAVCALHLGVTLVYYLAG) threads the bilayer. Residues 45–402 (RDLRRLPQLV…KITVDIGTPS (358 aa)) are Lumenal-facing. Positions 77 to 130 (LRLRGVAPPPPLQNSSKPRSRAPSNLDAYSHPGPGPGPGSNLTSAPVPSTTTRS) are disordered. 2 N-linked (GlcNAc...) asparagine glycosylation sites follow: N90 and N117. The segment covering 116-130 (SNLTSAPVPSTTTRS) has biased composition (polar residues). Residues C134 and C176 are joined by a disulfide bond. Residues 187-191 (PFRNR), 226-228 (FNR), 253-254 (VD), and W314 contribute to the UDP-alpha-D-galactose site. A disulfide bridge connects residues C247 and C266. D254 provides a ligand contact to Mn(2+). 316 to 319 (GEDD) contacts N-acetyl-D-glucosamine. Residue H347 coordinates Mn(2+). 347–349 (HSR) contacts UDP-alpha-D-galactose. R359 is an N-acetyl-D-glucosamine binding site.

This sequence belongs to the glycosyltransferase 7 family. Homodimer; and heterodimer with alpha-lactalbumin to form lactose synthase. Interacts (via N-terminal cytoplasmic domain) with UBE2Q1 (via N-terminus); the interaction is direct. Mn(2+) serves as cofactor. Post-translationally, the soluble form derives from the membrane forms by proteolytic processing. In terms of tissue distribution, detected in milk (at protein level).

Its subcellular location is the golgi apparatus. The protein resides in the golgi stack membrane. It localises to the cell membrane. It is found in the cell surface. The protein localises to the cell projection. Its subcellular location is the filopodium. The protein resides in the secreted. It catalyses the reaction D-glucose + UDP-alpha-D-galactose = lactose + UDP + H(+). The enzyme catalyses an N-acetyl-beta-D-glucosaminyl derivative + UDP-alpha-D-galactose = a beta-D-galactosyl-(1-&gt;4)-N-acetyl-beta-D-glucosaminyl derivative + UDP + H(+). It carries out the reaction N-acetyl-D-glucosamine + UDP-alpha-D-galactose = beta-D-galactosyl-(1-&gt;4)-N-acetyl-D-glucosamine + UDP + H(+). The catalysed reaction is a beta-D-GlcNAc-(1-&gt;3)-beta-D-Gal-(1-&gt;4)-beta-D-Glc-(1&lt;-&gt;1)-Cer(d18:1(4E)) + UDP-alpha-D-galactose = a neolactoside nLc4Cer(d18:1(4E)) + UDP + H(+). It catalyses the reaction a beta-D-glucosylceramide + UDP-alpha-D-galactose = a beta-D-galactosyl-(1-&gt;4)-beta-D-glucosyl-(1&lt;-&gt;1)-ceramide + UDP + H(+). The enzyme catalyses a neolactoside IV(3)-beta-GlcNAc-nLc4Cer + UDP-alpha-D-galactose = a neolactoside nLc6Cer + UDP + H(+). It participates in protein modification; protein glycosylation. The Golgi complex form catalyzes the production of lactose in the lactating mammary gland and could also be responsible for the synthesis of complex-type N-linked oligosaccharides in many glycoproteins as well as the carbohydrate moieties of glycolipids. Functionally, the cell surface form functions as a recognition molecule during a variety of cell to cell and cell to matrix interactions, as those occurring during development and egg fertilization, by binding to specific oligosaccharide ligands on opposing cells or in the extracellular matrix. The secreted form is responsible for the synthesis of complex-type to N-linked oligosaccharides in many glycoproteins as well as the carbohydrate moieties of glycolipids. The sequence is that of Beta-1,4-galactosyltransferase 1 (B4GALT1) from Bos taurus (Bovine).